Here is a 316-residue protein sequence, read N- to C-terminus: Ribosomal RNA small subunit methyltransferase H (316 aa).

S-adenosyl-L-methionine-binding positions include 35–37 (AGH), Asp-55, Phe-84, Asp-105, and Gln-112.

This sequence belongs to the methyltransferase superfamily. RsmH family.

It localises to the cytoplasm. It carries out the reaction cytidine(1402) in 16S rRNA + S-adenosyl-L-methionine = N(4)-methylcytidine(1402) in 16S rRNA + S-adenosyl-L-homocysteine + H(+). Its function is as follows. Specifically methylates the N4 position of cytidine in position 1402 (C1402) of 16S rRNA. This Streptococcus sanguinis (strain SK36) protein is Ribosomal RNA small subunit methyltransferase H.